A 337-amino-acid chain; its full sequence is Nucleoid-associated protein PBPRA2585 (337 aa).

Belongs to the YejK family.

The protein resides in the cytoplasm. The protein localises to the nucleoid. This Photobacterium profundum (strain SS9) protein is Nucleoid-associated protein PBPRA2585.